A 614-amino-acid polypeptide reads, in one-letter code: Zinc finger and SCAN domain-containing protein 2 (614 aa).

Disordered regions lie at residues 1–25 (MAAE…EDEQ), 42–73 (AVLQ…EGPQ), and 162–200 (NISG…RVVP). The SCAN box domain occupies 69–127 (AEGPQGALVRFRELCRRWLRPEVHTKEQMLTVLPREIQAWLQEHRPESSEEAVALVEDL). C2H2-type zinc fingers lie at residues 222–244 (YECP…ERTH), 250–272 (YKCD…QTTH), 278–300 (YKCR…QRIH), 306–328 (FQCA…QRTH), 334–356 (YSCP…QGIH), 362–384 (YACK…QRIH), 390–412 (YKCT…RRTH), 418–440 (YQCG…RRTH), 446–468 (YKCG…QGTH), 474–496 (YECL…QRTH), 502–524 (YRCG…QRTH), 530–552 (YKCL…QRAH), 558–580 (YRCP…QRIH), and 586–608 (YRCP…QRTH).

This sequence belongs to the krueppel C2H2-type zinc-finger protein family. In the adult, predominantly found in spermatids. Also present in the embryo.

It localises to the nucleus. May be involved in transcriptional regulation during the post-meiotic stages of spermatogenesis. In Mus musculus (Mouse), this protein is Zinc finger and SCAN domain-containing protein 2 (Zscan2).